The chain runs to 1051 residues: Kinesin-like protein KIN-UC (1051 aa).

3 stretches are compositionally biased toward low complexity: residues 1–12 (MSSSNSSSAVRS), 28–39 (NSNHAVSLSSSS), and 64–90 (SASSSSSSSSVSASSPSTRRSGTPVRR). Disordered stretches follow at residues 1-39 (MSSSNSSSAVRSSAKHAAERIQQHLPPNSNHAVSLSSSS) and 51-109 (PGIA…RVSV). The Kinesin motor domain maps to 104 to 441 (RVRVSVRVRP…IMFGQRAMKI (338 aa)). 189–196 (GQTGTGKT) is a binding site for ATP. The D-BOX signature appears at 411–419 (RTSLIITIG). Coiled coils occupy residues 452–534 (DYES…QKDQ) and 568–761 (DTSQ…KRYM). Residues 753 to 766 (NVVEEKRYMKEDLS) show a composition bias toward basic and acidic residues. The segment at 753–788 (NVVEEKRYMKEDLSKGSAESGAQTGSQRSQGLKKSL) is disordered. The segment covering 772 to 788 (SGAQTGSQRSQGLKKSL) has biased composition (polar residues). 3 ARM repeats span residues 792–831 (RATMARLCEEVGIQKILQLIKSEDLEVQIQAVKVVANLAA), 833–873 (EANQ…NLAM), and 875–915 (EKSQ…NLCG). One copy of the ARM 4; degenerate repeat lies at 917-956 (EKFLKLLKEEEGIKGLLTMAQSGNIDIIAQVARGMANFAK).

Belongs to the TRAFAC class myosin-kinesin ATPase superfamily. Kinesin family. Ungrouped subfamily. In terms of assembly, interacts (via C-terminus) with NEK5. In terms of tissue distribution, expressed in young root hair-forming cells and in root hair-producing cells at the boundary between the hypocotyl and root. Expressed in cotyledons, young leaves, trichomes and flowers.

The protein localises to the cytoplasm. It is found in the cytoskeleton. It localises to the spindle. Its subcellular location is the phragmoplast. Its function is as follows. Acts as a plus-end microtubule-dependent motor protein. Involved in the control of root hair tip growth by promoting microtubule depolymerization and limiting the accumulation of endoplasmic microtubules. In vitro, binds to polymerized actin through ARM repeats, and to polymerized tubulin through N-terminal motor domain. This chain is Kinesin-like protein KIN-UC, found in Arabidopsis thaliana (Mouse-ear cress).